Here is a 449-residue protein sequence, read N- to C-terminus: Adenylosuccinate synthetase isozyme 1 A (449 aa).

The span at methionine 1–proline 10 shows a compositional bias: polar residues. Residues methionine 1–glycine 22 are disordered. GTP contacts are provided by residues glycine 34 to lysine 40 and glycine 62 to threonine 64. Aspartate 35 serves as the catalytic Proton acceptor. Mg(2+) contacts are provided by aspartate 35 and glycine 62. Aspartate 35 is a substrate binding site. IMP is bound by residues aspartate 35–lysine 38, asparagine 60–histidine 63, threonine 155, arginine 169, asparagine 248, threonine 263, and arginine 327. The active-site Proton donor is histidine 63. A substrate-binding site is contributed by valine 323–arginine 329. GTP is bound by residues arginine 329, lysine 355–aspartate 357, and glycine 437–lysine 440.

This sequence belongs to the adenylosuccinate synthetase family. In terms of assembly, homodimer. Mg(2+) is required as a cofactor.

The protein resides in the cytoplasm. The catalysed reaction is IMP + L-aspartate + GTP = N(6)-(1,2-dicarboxyethyl)-AMP + GDP + phosphate + 2 H(+). The protein operates within purine metabolism; AMP biosynthesis via de novo pathway; AMP from IMP: step 1/2. In terms of biological role, component of the purine nucleotide cycle (PNC), which interconverts IMP and AMP to regulate the nucleotide levels in various tissues, and which contributes to glycolysis and ammoniagenesis. Catalyzes the first committed step in the biosynthesis of AMP from IMP. In Salmo salar (Atlantic salmon), this protein is Adenylosuccinate synthetase isozyme 1 A (adss1a).